The following is a 357-amino-acid chain: cAMP-responsive element modulator (357 aa).

One can recognise a KID domain in the interval 101-160; the sequence is TVQVATIAETDDSADSEVIDSHKRREILSRRPSYRKILNELSSDVPGIPKIEEEKSEEEG. A phosphoserine mark is found at serine 116, serine 142, serine 284, serine 287, and serine 290. Residues 299 to 357 form the bZIP domain; it reads TRKRELRLMKNREAAKECRRRKKEYVKCLESRVAVLEVQNKKLIEELETLKDICSPKTD. Positions 300-325 are basic motif; sequence RKRELRLMKNREAAKECRRRKKEYVK. The interval 327-348 is leucine-zipper; the sequence is LESRVAVLEVQNKKLIEELETL.

Belongs to the bZIP family. In terms of assembly, binds DNA as a dimer. Interacts with CDC34. Interacts with FHL5. Isoform delta forms a heterodimer with CREB3L4. May interact with TSSK4. Post-translationally, stimulated by phosphorylation. Phosphorylated on Ser-116 by TSSK4 in vitro. In terms of processing, ubiquitinated by CDC34 and RAD6B in order to be degraded by the proteasome. Isoform Tau is expressed in testis germ cells. CREM-theta1- and CREM-theta2-containing isoforms are expressed in testis.

Its subcellular location is the nucleus. Its function is as follows. Transcriptional regulator that binds the cAMP response element (CRE), a sequence present in many viral and cellular promoters. Isoforms are either transcriptional activators or repressors. Isoform Delta is an activator. Plays a role in spermatogenesis and is involved in spermatid maturation. Binding of isoform Tau (activator) to CRE is increased by CREB3L4. The CREM isoform Tau-CREB3L4 heterodimer functions through CRE and may recruit HIRA to CRE to regulate histone exchange. The protein is cAMP-responsive element modulator (Crem) of Rattus norvegicus (Rat).